Consider the following 510-residue polypeptide: D-alanine--D-alanyl carrier protein ligase (510 aa).

157–158 (TS) contacts ATP. Position 202 (aspartate 202) interacts with D-alanine. Residue 297 to 302 (NTYGPT) coordinates ATP. A D-alanine-binding site is contributed by valine 306. Positions 389 and 498 each coordinate ATP. A D-alanine-binding site is contributed by lysine 498.

Belongs to the ATP-dependent AMP-binding enzyme family. DltA subfamily.

Its subcellular location is the cytoplasm. The enzyme catalyses holo-[D-alanyl-carrier protein] + D-alanine + ATP = D-alanyl-[D-alanyl-carrier protein] + AMP + diphosphate. Its pathway is cell wall biogenesis; lipoteichoic acid biosynthesis. In terms of biological role, catalyzes the first step in the D-alanylation of lipoteichoic acid (LTA), the activation of D-alanine and its transfer onto the D-alanyl carrier protein (Dcp) DltC. In an ATP-dependent two-step reaction, forms a high energy D-alanyl-AMP intermediate, followed by transfer of the D-alanyl residue as a thiol ester to the phosphopantheinyl prosthetic group of the Dcp. D-alanylation of LTA plays an important role in modulating the properties of the cell wall in Gram-positive bacteria, influencing the net charge of the cell wall. The polypeptide is D-alanine--D-alanyl carrier protein ligase (Listeria innocua serovar 6a (strain ATCC BAA-680 / CLIP 11262)).